The following is a 156-amino-acid chain: ATP synthase subunit b (156 aa).

The helical transmembrane segment at 7–27 (LFVQAIVFLILVLFTMKFVWP) threads the bilayer.

The protein belongs to the ATPase B chain family. F-type ATPases have 2 components, F(1) - the catalytic core - and F(0) - the membrane proton channel. F(1) has five subunits: alpha(3), beta(3), gamma(1), delta(1), epsilon(1). F(0) has three main subunits: a(1), b(2) and c(10-14). The alpha and beta chains form an alternating ring which encloses part of the gamma chain. F(1) is attached to F(0) by a central stalk formed by the gamma and epsilon chains, while a peripheral stalk is formed by the delta and b chains.

It is found in the cell inner membrane. Functionally, f(1)F(0) ATP synthase produces ATP from ADP in the presence of a proton or sodium gradient. F-type ATPases consist of two structural domains, F(1) containing the extramembraneous catalytic core and F(0) containing the membrane proton channel, linked together by a central stalk and a peripheral stalk. During catalysis, ATP synthesis in the catalytic domain of F(1) is coupled via a rotary mechanism of the central stalk subunits to proton translocation. In terms of biological role, component of the F(0) channel, it forms part of the peripheral stalk, linking F(1) to F(0). This is ATP synthase subunit b from Paracidovorax citrulli (strain AAC00-1) (Acidovorax citrulli).